The sequence spans 120 residues: Movement protein TGB2 (120 aa).

The Cytoplasmic segment spans residues 1–16; it reads MSSTSEPTYQLAPPDS. A helical transmembrane segment spans residues 17-37; sequence LKQVYLTLAAGFAVGLGIFLL. Residues 38–76 are Lumenal-facing; sequence RTNTLPHTGDNIHHLPHGGCYRDGTKSIRYNSPGVATSS. A helical membrane pass occupies residues 77–97; that stretch reads NIFLPAVAVLCILALLHVPFF. Residues 98–120 are Cytoplasmic-facing; that stretch reads QPDRVRRRCCRFYWCADPHHPTV.

Belongs to the Tymovirales TGBp2 protein family.

The protein resides in the host endoplasmic reticulum membrane. Its function is as follows. Plays a role in viral cell-to-cell propagation, by facilitating genome transport to neighboring plant cells through plasmosdesmata,. The sequence is that of Movement protein TGB2 (ORF3) from Lolium latent virus (isolate Lolium/USA/US1/-) (LoLV).